We begin with the raw amino-acid sequence, 250 residues long: PTB-containing, cubilin and LRP1-interacting protein (250 aa).

The 158-residue stretch at 93-250 folds into the PID domain; the sequence is VTYLGKVSTT…VSQELESDDG (158 aa). Positions 229–250 are disordered; sequence DGRIHSNSSSEEVSQELESDDG. Phosphoserine is present on residues Ser236 and Ser247. Over residues 241 to 250 the composition is skewed to acidic residues; the sequence is VSQELESDDG.

In terms of assembly, found in a complex with PID1/PCLI1, LRP1 and CUBNI. Interacts with LRP1 and CUBN. Expressed in subcutaneous fat, heart, skeletal muscle, brain, colon, thymus, spleen, kidney, liver, small intestine, placenta, lung and peripheral blood leukocyte.

It is found in the cytoplasm. Increases proliferation of preadipocytes without affecting adipocytic differentiation. This chain is PTB-containing, cubilin and LRP1-interacting protein (PID1), found in Homo sapiens (Human).